A 236-amino-acid chain; its full sequence is 2,3,4,5-tetrahydropyridine-2,6-dicarboxylate N-acetyltransferase (236 aa).

The protein belongs to the transferase hexapeptide repeat family. DapH subfamily.

It catalyses the reaction (S)-2,3,4,5-tetrahydrodipicolinate + acetyl-CoA + H2O = L-2-acetamido-6-oxoheptanedioate + CoA. Its pathway is amino-acid biosynthesis; L-lysine biosynthesis via DAP pathway; LL-2,6-diaminopimelate from (S)-tetrahydrodipicolinate (acetylase route): step 1/3. Its function is as follows. Catalyzes the transfer of an acetyl group from acetyl-CoA to tetrahydrodipicolinate. The polypeptide is 2,3,4,5-tetrahydropyridine-2,6-dicarboxylate N-acetyltransferase (Clostridium botulinum (strain Okra / Type B1)).